We begin with the raw amino-acid sequence, 456 residues long: Phosphomethylpyrimidine synthase (456 aa).

Residues Asn80, Met109, Tyr139, His175, 195–197 (SRG), 236–239 (DSLR), and Glu275 contribute to the substrate site. Residue His279 participates in Zn(2+) binding. Substrate is bound at residue Tyr302. Residue His343 participates in Zn(2+) binding. Residues Cys423, Cys426, and Cys431 each coordinate [4Fe-4S] cluster.

Belongs to the ThiC family. Requires [4Fe-4S] cluster as cofactor.

The enzyme catalyses 5-amino-1-(5-phospho-beta-D-ribosyl)imidazole + S-adenosyl-L-methionine = 4-amino-2-methyl-5-(phosphooxymethyl)pyrimidine + CO + 5'-deoxyadenosine + formate + L-methionine + 3 H(+). The protein operates within cofactor biosynthesis; thiamine diphosphate biosynthesis. Functionally, catalyzes the synthesis of the hydroxymethylpyrimidine phosphate (HMP-P) moiety of thiamine from aminoimidazole ribotide (AIR) in a radical S-adenosyl-L-methionine (SAM)-dependent reaction. This is Phosphomethylpyrimidine synthase from Prochlorococcus marinus (strain MIT 9312).